The chain runs to 302 residues: Diacetylchitobiose uptake system permease protein NgcG (302 aa).

The next 6 membrane-spanning stretches (helical) occupy residues 40–60 (LLILWSVIVIVPMLWVLMSSF), 99–119 (VIVVVSALILVMLLGAMCAYV), 131–151 (IYYVMLAGLTFPVFLAIVPLF), 166–186 (LILTYVAFALPFTMFFLYSFF), 221–241 (AAVAIFNFLGLWNQFLLPVAL), and 268–288 (GALFAAIVVTVVPVLLVYCVF). The region spanning 95–288 (FLNSVIVVVS…VPVLLVYCVF (194 aa)) is the ABC transmembrane type-1 domain.

The protein belongs to the binding-protein-dependent transport system permease family. As to quaternary structure, the complex is composed of two ATP-binding proteins (MsiK), two transmembrane proteins (NgcF and NgcG) and a solute-binding protein (NgcE).

It localises to the cell membrane. Part of the ABC transporter complex NgcEFG-MsiK involved in N,N'-diacetylchitobiose ((GlcNAc)2) uptake. Responsible for the translocation of the substrate across the membrane. In Streptomyces coelicolor (strain ATCC BAA-471 / A3(2) / M145), this protein is Diacetylchitobiose uptake system permease protein NgcG.